A 60-amino-acid chain; its full sequence is UPF0434 protein Vapar_2640 (60 aa).

It belongs to the UPF0434 family.

This is UPF0434 protein Vapar_2640 from Variovorax paradoxus (strain S110).